The primary structure comprises 155 residues: Large ribosomal subunit protein eL24 (155 aa).

The tract at residues 92–155 (AKRNMKPEVR…KSAPRVGGKR (64 aa)) is disordered. Residues 96 to 117 (MKPEVRKAQRDQAIKAAKEQKK) show a composition bias toward basic and acidic residues. Positions 124–133 (KASAPAPKAK) are enriched in low complexity.

It belongs to the eukaryotic ribosomal protein eL24 family.

The polypeptide is Large ribosomal subunit protein eL24 (RpL24) (Spodoptera frugiperda (Fall armyworm)).